A 174-amino-acid chain; its full sequence is Putative NADH dehydrogenase/NAD(P)H nitroreductase AF_2267 (174 aa).

107–112 (AARCLG) contacts NAD(+).

It belongs to the nitroreductase family. FMN is required as a cofactor.

This Archaeoglobus fulgidus (strain ATCC 49558 / DSM 4304 / JCM 9628 / NBRC 100126 / VC-16) protein is Putative NADH dehydrogenase/NAD(P)H nitroreductase AF_2267.